The following is a 319-amino-acid chain: Quinolinate synthase (319 aa).

Iminosuccinate is bound by residues H34 and S51. C96 provides a ligand contact to [4Fe-4S] cluster. Iminosuccinate contacts are provided by residues 122 to 124 and S139; that span reads YIN. Residue C182 participates in [4Fe-4S] cluster binding. Iminosuccinate contacts are provided by residues 208–210 and T225; that span reads HPE. C276 serves as a coordination point for [4Fe-4S] cluster.

The protein belongs to the quinolinate synthase family. Type 2 subfamily. [4Fe-4S] cluster is required as a cofactor.

It is found in the cytoplasm. The catalysed reaction is iminosuccinate + dihydroxyacetone phosphate = quinolinate + phosphate + 2 H2O + H(+). The protein operates within cofactor biosynthesis; NAD(+) biosynthesis; quinolinate from iminoaspartate: step 1/1. Functionally, catalyzes the condensation of iminoaspartate with dihydroxyacetone phosphate to form quinolinate. The sequence is that of Quinolinate synthase from Thermosynechococcus vestitus (strain NIES-2133 / IAM M-273 / BP-1).